We begin with the raw amino-acid sequence, 190 residues long: Holliday junction branch migration complex subunit RuvA (190 aa).

The segment at 1-65 (MIGNLRGIVD…ENVTQLYGFI (65 aa)) is domain I. Positions 66–143 (SKEEQQCLRL…KLEINNNHFH (78 aa)) are domain II. The flexible linker stretch occupies residues 144–147 (SISE). A domain III region spans residues 147–190 (EDALSALINLGYERTKAYDTIKKIEDESPNLDTKDIIRMALKTI).

This sequence belongs to the RuvA family. As to quaternary structure, homotetramer. Forms an RuvA(8)-RuvB(12)-Holliday junction (HJ) complex. HJ DNA is sandwiched between 2 RuvA tetramers; dsDNA enters through RuvA and exits via RuvB. An RuvB hexamer assembles on each DNA strand where it exits the tetramer. Each RuvB hexamer is contacted by two RuvA subunits (via domain III) on 2 adjacent RuvB subunits; this complex drives branch migration. In the full resolvosome a probable DNA-RuvA(4)-RuvB(12)-RuvC(2) complex forms which resolves the HJ.

It localises to the cytoplasm. In terms of biological role, the RuvA-RuvB-RuvC complex processes Holliday junction (HJ) DNA during genetic recombination and DNA repair, while the RuvA-RuvB complex plays an important role in the rescue of blocked DNA replication forks via replication fork reversal (RFR). RuvA specifically binds to HJ cruciform DNA, conferring on it an open structure. The RuvB hexamer acts as an ATP-dependent pump, pulling dsDNA into and through the RuvAB complex. HJ branch migration allows RuvC to scan DNA until it finds its consensus sequence, where it cleaves and resolves the cruciform DNA. This is Holliday junction branch migration complex subunit RuvA from Wolbachia pipientis subsp. Culex pipiens (strain wPip).